The chain runs to 290 residues: MQIPRSIGTHDGSFHADEVTACALLIIFDLVDENKIIRSRDPVVLSKCEYVCDVGGVYSIENKRFDHHQVSYDGSWSSAGMILHYLKEFGYMDCEEYHFLNNTLVHGVDEQDNGRFFSKEGFCSFSDIIKIYNPREEEETNSDADFSCALHFTIDFLCRLRKKFQYDRVCRGIVREAMETEDMCLYFDRPLAWQENFFFLGGEKHPAAFVCFPSCDQWILRGIPPNLDRRMEVRVPFPENWAGLLGKELSKVSGIPGAVFCHKGLFLSVWTNRESCQRALRLTLQDRGII.

This sequence belongs to the MYG1 family.

The sequence is that of MYG1 protein CPn_0489/CP_0265/CPj0489/CpB0509 from Chlamydia pneumoniae (Chlamydophila pneumoniae).